The following is a 62-amino-acid chain: Photosystem II reaction center protein Z (62 aa).

The next 2 helical transmembrane spans lie at 8–28 (ALLL…VLYA) and 41–61 (LVGG…NYFV).

Belongs to the PsbZ family. In terms of assembly, PSII is composed of 1 copy each of membrane proteins PsbA, PsbB, PsbC, PsbD, PsbE, PsbF, PsbH, PsbI, PsbJ, PsbK, PsbL, PsbM, PsbT, PsbX, PsbY, PsbZ, Psb30/Ycf12, peripheral proteins PsbO, CyanoQ (PsbQ), PsbU, PsbV and a large number of cofactors. It forms dimeric complexes.

The protein resides in the cellular thylakoid membrane. May control the interaction of photosystem II (PSII) cores with the light-harvesting antenna, regulates electron flow through the 2 photosystem reaction centers. PSII is a light-driven water plastoquinone oxidoreductase, using light energy to abstract electrons from H(2)O, generating a proton gradient subsequently used for ATP formation. The chain is Photosystem II reaction center protein Z from Synechococcus elongatus (strain ATCC 33912 / PCC 7942 / FACHB-805) (Anacystis nidulans R2).